The chain runs to 277 residues: Large ribosomal subunit protein uL2 (277 aa).

2 disordered regions span residues 32-58 (KSLT…RGGG) and 225-277 (VAMN…RRNN).

It belongs to the universal ribosomal protein uL2 family. In terms of assembly, part of the 50S ribosomal subunit. Forms a bridge to the 30S subunit in the 70S ribosome.

In terms of biological role, one of the primary rRNA binding proteins. Required for association of the 30S and 50S subunits to form the 70S ribosome, for tRNA binding and peptide bond formation. It has been suggested to have peptidyltransferase activity; this is somewhat controversial. Makes several contacts with the 16S rRNA in the 70S ribosome. This Borrelia recurrentis (strain A1) protein is Large ribosomal subunit protein uL2.